We begin with the raw amino-acid sequence, 621 residues long: 1-deoxy-D-xylulose-5-phosphate synthase (621 aa).

Residues histidine 80 and 121-123 (GHS) contribute to the thiamine diphosphate site. Aspartate 152 contacts Mg(2+). Thiamine diphosphate contacts are provided by residues 153–154 (GA), asparagine 181, tyrosine 288, and glutamate 370. Residue asparagine 181 coordinates Mg(2+).

It belongs to the transketolase family. DXPS subfamily. In terms of assembly, homodimer. It depends on Mg(2+) as a cofactor. Requires thiamine diphosphate as cofactor.

The catalysed reaction is D-glyceraldehyde 3-phosphate + pyruvate + H(+) = 1-deoxy-D-xylulose 5-phosphate + CO2. The protein operates within metabolic intermediate biosynthesis; 1-deoxy-D-xylulose 5-phosphate biosynthesis; 1-deoxy-D-xylulose 5-phosphate from D-glyceraldehyde 3-phosphate and pyruvate: step 1/1. Its function is as follows. Catalyzes the acyloin condensation reaction between C atoms 2 and 3 of pyruvate and glyceraldehyde 3-phosphate to yield 1-deoxy-D-xylulose-5-phosphate (DXP). In Vibrio vulnificus (strain CMCP6), this protein is 1-deoxy-D-xylulose-5-phosphate synthase.